We begin with the raw amino-acid sequence, 261 residues long: Early 31 kDa protein (261 aa).

Residues 230 to 261 are disordered; sequence INKYSADTDEEEEEEEDNAEDTEEEEEEEADQ. The span at 236 to 261 shows a compositional bias: acidic residues; sequence DTDEEEEEEEDNAEDTEEEEEEEADQ.

The protein is Early 31 kDa protein of Frog virus 3 (isolate Goorha) (FV-3).